Consider the following 685-residue polypeptide: MGLLSIPYQSKSKLWIAIFLVVWSLISMHFIWQSQANSGLILKNELSSTSSIPHEFEMLIDTNYPKFKPTSGHSGSQTYSNLFKNQDRNAAIFTILKNFDLEQRCQLYFKNVKNDKLIVDPDHDFKFDRFDYLNWDEYRDESIKRLKGDNDEFVATSSDLDTIKKNFDKAKSRIASDLQLLHDYFSHIKIYNQCYIDRNTSFIKKQHELIDGLNWKTSFKRSSFLSGKQIVTEQQMYPWLSQKSPEYNCLATGQTTKFAANKNSFLNTLKNNLNGKGIVMTIADAHIDYCIRLIHLLRYLKNTLPIQIIYTSNDLSAESKSQLHQASVSDFDGLPQQNITLVNVTPAIKPQYLHKFNEFGNKILAILFNTFEEMIFIDADAILIENPEKFFQLTKYKNSGALFFRDRNTSEYRPDHDIEMFLKLMNSQYDEIIFGLLQITEKTMSIPLFDRKISHVMESGLVLLNRKVHFSQPLIMANMNFFEPIRERVYGDKEMFWLSLSIIGDENYQFNSHPAAAIGQLTTYQERVKTFENPPSSFKSQEICANHPAHISDEDNHTLLWFNSGFQFCNQLEKVNYEDEFSHKERYSQFDTIDKFKTFWQSSLVIESAIIPPENTNSNGGDGYEPSVSWKHMEPYCAGYTWCAYSSIGNGDQANDRGLVINYSPEEIEHFKKLGEIWMRGYNYL.

Residues 1-13 (MGLLSIPYQSKSK) are Cytoplasmic-facing. Residues 14–34 (LWIAIFLVVWSLISMHFIWQS) traverse the membrane as a helical segment. Residues 35–685 (QANSGLILKN…EIWMRGYNYL (651 aa)) lie on the Lumenal side of the membrane. Residues asparagine 199, asparagine 338, asparagine 408, and asparagine 556 are each glycosylated (N-linked (GlcNAc...) asparagine).

This sequence belongs to the MNN1/MNT family.

Its subcellular location is the golgi apparatus membrane. The protein operates within protein modification; protein glycosylation. Responsible for addition of the terminal mannose residues to the outer chain of core N-linked polysaccharides and to O-linked mannotriose. Implicated in late Golgi modifications. Involved in virulence. The polypeptide is Putative alpha-1,3-mannosyltransferase MNN14 (MNN14) (Candida albicans (strain SC5314 / ATCC MYA-2876) (Yeast)).